The chain runs to 370 residues: DNA replication and repair protein RecF (370 aa).

Residue 30–37 coordinates ATP; the sequence is GPNGSGKT.

It belongs to the RecF family.

It localises to the cytoplasm. In terms of biological role, the RecF protein is involved in DNA metabolism; it is required for DNA replication and normal SOS inducibility. RecF binds preferentially to single-stranded, linear DNA. It also seems to bind ATP. The chain is DNA replication and repair protein RecF from Prosthecochloris aestuarii (strain DSM 271 / SK 413).